The chain runs to 365 residues: Peptide chain release factor 2 (365 aa).

Q252 carries the N5-methylglutamine modification.

The protein belongs to the prokaryotic/mitochondrial release factor family. Post-translationally, methylated by PrmC. Methylation increases the termination efficiency of RF2.

The protein resides in the cytoplasm. Peptide chain release factor 2 directs the termination of translation in response to the peptide chain termination codons UGA and UAA. This chain is Peptide chain release factor 2, found in Proteus mirabilis (strain HI4320).